The chain runs to 621 residues: MSPVFPMLTVLTMFYYICLRRRARTATRGEMMNTHRAIESNSQTSPLNAEVVQYAKEVVDFSSHYGSENSMSYTMWNLAGVPNVFPSSGDFTQTAVFRTYGTWWDQCPSASLPFKRTPPNFQSQDYVELTFEQQVYPTAVHVLETYHPGAVIRILACSANPYSPNPPAEVRWEILWSERPTKVNASQARQFKPCIKQINFPTNLIRLEVNSSLLEYYTELDAVVLHGVKDKPVLSLKTSLIDMNDIEDDAYAEKDGCGMDSLNKKFSSAVLGEGPNNGYFDKLPYELIQLILNHLTLPDLCRLAQTCKLLSQHCCDPLQYIHLNLQPYWAKLDDTSLEFLQSRCTLVQWLNLSWTGNRGFISVAGFSRFLKVCGSELVRLELSCSHFLNETCLEVISEMCPNLQALNLSSCDKLPPQAFNHIAKLCSLKRLVLYRTKVEQTALLSILNFCSELQHLSLGSCVMIEDYDVIASMIGAKCKKLRTLDLWRCKNITENGIAELASGCPLLEELDLGWCPTLQSSTGCFTRLAHQLPNLQKLFLTANRSVCDTDIDELACNCTRLQQLDILGTRMVSPASLRKLLESCKDLSLLDVSFCSQIDNRAVLELNASFPKVFIKKSFTQ.

Arg28 carries the post-translational modification Asymmetric dimethylarginine. Positions 277 to 332 constitute an F-box domain; it reads NGYFDKLPYELIQLILNHLTLPDLCRLAQTCKLLSQHCCDPLQYIHLNLQPYWAKL. 9 LRR repeats span residues 376-397, 402-421, 427-448, 452-474, 480-501, 504-524, 532-558, 559-583, and 584-609; these read ELVR…EVIS, NLQA…AFNH, SLKR…SILN, ELQH…ASMI, KLRT…AELA, CPLL…STGC, LPNL…ACNC, TRLQ…LLES, and CKDL…LNAS.

As to quaternary structure, part of a SCF (SKP1-CUL1-F-box) protein ligase complex. Interacts with VCP. Interacts with PPTC7; this interaction promotes destruction of BNIP3 and NIX and mitophagy suppression. Expressed in heart, kidney, liver, lung, pancreas, and placenta, but not in skeletal muscle.

The protein localises to the cytoplasm. The protein resides in the nucleus. It localises to the mitochondrion outer membrane. Substrate-recognition component of the mitochondria-localized SCF-FBXL4 ubiquitin E3 ligase complex that plays a role in the restriction of mitophagy by controlling the degradation of BNIP3 and NIX mitophagy receptors. Rescues also mitochondrial injury through reverting hyperactivation of DRP1-mediated mitochondrial fission. The sequence is that of F-box/LRR-repeat protein 4 (FBXL4) from Homo sapiens (Human).